The following is an 81-amino-acid chain: HssA/B-like protein 5 (81 aa).

Belongs to the hssA/B family.

The chain is HssA/B-like protein 5 (hssl5) from Dictyostelium discoideum (Social amoeba).